We begin with the raw amino-acid sequence, 63 residues long: Large ribosomal subunit protein bL35 (63 aa).

This sequence belongs to the bacterial ribosomal protein bL35 family.

The sequence is that of Large ribosomal subunit protein bL35 from Campylobacter curvus (strain 525.92).